A 104-amino-acid chain; its full sequence is L-rhamnose mutarotase (104 aa).

Tyr18 lines the substrate pocket. His22 (proton donor) is an active-site residue. Substrate is bound by residues Tyr41 and Trp76–Trp77.

This sequence belongs to the rhamnose mutarotase family. In terms of assembly, homodimer.

The protein localises to the cytoplasm. The enzyme catalyses alpha-L-rhamnose = beta-L-rhamnose. It participates in carbohydrate metabolism; L-rhamnose metabolism. In terms of biological role, involved in the anomeric conversion of L-rhamnose. The polypeptide is L-rhamnose mutarotase (Escherichia coli O8 (strain IAI1)).